Here is a 483-residue protein sequence, read N- to C-terminus: Glutamyl-tRNA(Gln) amidotransferase subunit A (483 aa).

Catalysis depends on charge relay system residues K75 and S150. S174 acts as the Acyl-ester intermediate in catalysis.

The protein belongs to the amidase family. GatA subfamily. As to quaternary structure, heterotrimer of A, B and C subunits.

The catalysed reaction is L-glutamyl-tRNA(Gln) + L-glutamine + ATP + H2O = L-glutaminyl-tRNA(Gln) + L-glutamate + ADP + phosphate + H(+). Functionally, allows the formation of correctly charged Gln-tRNA(Gln) through the transamidation of misacylated Glu-tRNA(Gln) in organisms which lack glutaminyl-tRNA synthetase. The reaction takes place in the presence of glutamine and ATP through an activated gamma-phospho-Glu-tRNA(Gln). The protein is Glutamyl-tRNA(Gln) amidotransferase subunit A of Legionella pneumophila (strain Paris).